A 585-amino-acid chain; its full sequence is Arginine--tRNA ligase (585 aa).

The 'HIGH' region motif lies at 126–136 (PNIAKEMHVGH).

The protein belongs to the class-I aminoacyl-tRNA synthetase family. As to quaternary structure, monomer.

It is found in the cytoplasm. It catalyses the reaction tRNA(Arg) + L-arginine + ATP = L-arginyl-tRNA(Arg) + AMP + diphosphate. This chain is Arginine--tRNA ligase, found in Crocosphaera subtropica (strain ATCC 51142 / BH68) (Cyanothece sp. (strain ATCC 51142)).